The primary structure comprises 384 residues: Magnesium transporter MRS2-I (384 aa).

A run of 2 helical transmembrane segments spans residues 319 to 339 (LFLS…GIFG) and 356 to 376 (WVVL…VAYA). A Required for magnesium transport activity motif is present at residues 339–341 (GMN).

It belongs to the CorA metal ion transporter (MIT) (TC 1.A.35.5) family.

The protein localises to the membrane. Magnesium transporter that may mediate the influx of magnesium. The protein is Magnesium transporter MRS2-I (MRS2-I) of Oryza sativa subsp. japonica (Rice).